Here is a 247-residue protein sequence, read N- to C-terminus: UPF0259 membrane protein BUsg_265 (247 aa).

The next 6 membrane-spanning stretches (helical) occupy residues Ile20 to Leu40, Ile82 to Leu102, Ile114 to Ile134, Phe137 to Leu157, Ile188 to Ser208, and Phe217 to Leu237.

Belongs to the UPF0259 family.

The protein resides in the cell membrane. The protein is UPF0259 membrane protein BUsg_265 of Buchnera aphidicola subsp. Schizaphis graminum (strain Sg).